We begin with the raw amino-acid sequence, 152 residues long: 3-dehydroquinate dehydratase (152 aa).

Tyr22 serves as the catalytic Proton acceptor. Substrate is bound by residues Asn73, His79, and Asp86. The Proton donor role is filled by His99. Substrate is bound by residues 100 to 101 and Arg110; that span reads LS.

It belongs to the type-II 3-dehydroquinase family. In terms of assembly, homododecamer.

It catalyses the reaction 3-dehydroquinate = 3-dehydroshikimate + H2O. The protein operates within metabolic intermediate biosynthesis; chorismate biosynthesis; chorismate from D-erythrose 4-phosphate and phosphoenolpyruvate: step 3/7. Its function is as follows. Catalyzes a trans-dehydration via an enolate intermediate. This Gemmatimonas aurantiaca (strain DSM 14586 / JCM 11422 / NBRC 100505 / T-27) protein is 3-dehydroquinate dehydratase.